The primary structure comprises 250 residues: 3-deoxy-manno-octulosonate cytidylyltransferase (250 aa).

It belongs to the KdsB family.

The protein resides in the cytoplasm. It catalyses the reaction 3-deoxy-alpha-D-manno-oct-2-ulosonate + CTP = CMP-3-deoxy-beta-D-manno-octulosonate + diphosphate. Its pathway is nucleotide-sugar biosynthesis; CMP-3-deoxy-D-manno-octulosonate biosynthesis; CMP-3-deoxy-D-manno-octulosonate from 3-deoxy-D-manno-octulosonate and CTP: step 1/1. It participates in bacterial outer membrane biogenesis; lipopolysaccharide biosynthesis. Functionally, activates KDO (a required 8-carbon sugar) for incorporation into bacterial lipopolysaccharide in Gram-negative bacteria. In Cytophaga hutchinsonii (strain ATCC 33406 / DSM 1761 / CIP 103989 / NBRC 15051 / NCIMB 9469 / D465), this protein is 3-deoxy-manno-octulosonate cytidylyltransferase.